Consider the following 687-residue polypeptide: Phage-like element PBSX protein XkdV (687 aa).

To B.subtilis YqcC.

This Bacillus subtilis (strain 168) protein is Phage-like element PBSX protein XkdV (xkdV).